The sequence spans 214 residues: Redox-sensing transcriptional repressor Rex (214 aa).

Residues 17–56 constitute a DNA-binding region (H-T-H motif); sequence LYYRIFKRFHADQVEKASSKQIADAMGIDSATVRRDFSYF. 91 to 96 contacts NAD(+); that stretch reads GCGNIG.

It belongs to the transcriptional regulatory Rex family. In terms of assembly, homodimer.

The protein resides in the cytoplasm. Modulates transcription in response to changes in cellular NADH/NAD(+) redox state. The polypeptide is Redox-sensing transcriptional repressor Rex (Streptococcus pyogenes serotype M12 (strain MGAS9429)).